A 92-amino-acid chain; its full sequence is YcgL domain-containing protein VC_1957 (92 aa).

Residues 1 to 84 (MLCSIYKSPK…PPENLLEQHK (84 aa)) enclose the YcgL domain. Residues 69–92 (FLQLPPPPENLLEQHKERKARQTP) form a disordered region.

This is YcgL domain-containing protein VC_1957 from Vibrio cholerae serotype O1 (strain ATCC 39315 / El Tor Inaba N16961).